A 525-amino-acid polypeptide reads, in one-letter code: GMP synthase [glutamine-hydrolyzing] (525 aa).

A Glutamine amidotransferase type-1 domain is found at 9–207; that stretch reads RILILDFGSQ…VRDICQCEAL (199 aa). Cys-86 (nucleophile) is an active-site residue. Catalysis depends on residues His-181 and Glu-183. One can recognise a GMPS ATP-PPase domain in the interval 208-400; sequence WTPAKIIDDA…LGLPYDMLYR (193 aa). Residue 235–241 participates in ATP binding; the sequence is SGGVDSS.

Homodimer.

The enzyme catalyses XMP + L-glutamine + ATP + H2O = GMP + L-glutamate + AMP + diphosphate + 2 H(+). The protein operates within purine metabolism; GMP biosynthesis; GMP from XMP (L-Gln route): step 1/1. Catalyzes the synthesis of GMP from XMP. The polypeptide is GMP synthase [glutamine-hydrolyzing] (Salmonella arizonae (strain ATCC BAA-731 / CDC346-86 / RSK2980)).